Reading from the N-terminus, the 211-residue chain is N-(5'-phosphoribosyl)anthranilate isomerase (211 aa).

It belongs to the TrpF family.

The catalysed reaction is N-(5-phospho-beta-D-ribosyl)anthranilate = 1-(2-carboxyphenylamino)-1-deoxy-D-ribulose 5-phosphate. It participates in amino-acid biosynthesis; L-tryptophan biosynthesis; L-tryptophan from chorismate: step 3/5. The chain is N-(5'-phosphoribosyl)anthranilate isomerase from Pseudomonas aeruginosa (strain LESB58).